Consider the following 596-residue polypeptide: Inactive metallocarboxypeptidase ECM14 (596 aa).

Positions 1–22 are cleaved as a signal peptide; it reads MHFSVRLSLFLTLASSLPLVSA. Residues 23 to 184 constitute a propeptide that is removed on maturation; that stretch reads VPQHEDQAYT…QTIYESYPKA (162 aa). The segment at 181–210 is disordered; the sequence is YPKAGSAPPSQQGPTTRRFSPSASTSKSKP. Over residues 188-207 the composition is skewed to polar residues; it reads PPSQQGPTTRRFSPSASTSK. The 327-residue stretch at 220 to 546 folds into the Peptidase M14 domain; the sequence is DYQPLSVLLP…RAMVAMGKFL (327 aa). Residues His-285 and Glu-288 each contribute to the Zn(2+) site. Residues 285–288, Arg-343, and 360–361 contribute to the substrate site; these read HARE and DH. Cysteines 354 and 377 form a disulfide. Asn-370 carries an N-linked (GlcNAc...) asparagine glycan. Zn(2+) is bound at residue His-417. Position 418-419 (418-419) interacts with substrate; the sequence is SY. The segment at 557 to 596 is disordered; sequence DGLRASEEPQDYDNDLEDGEDDKDEQDSTVFRAQADDLQS. A compositionally biased stretch (acidic residues) spans 564–583; that stretch reads EPQDYDNDLEDGEDDKDEQD.

Belongs to the peptidase M14 family. Zn(2+) serves as cofactor.

Its subcellular location is the vacuole. The protein localises to the secreted. Its function is as follows. Inactive carboxypeptidase that may play a role in cell wall organization and biogenesis. The chain is Inactive metallocarboxypeptidase ECM14 (ECM14) from Trichophyton verrucosum (strain HKI 0517).